The following is a 140-amino-acid chain: uncharacterized protein (140 aa).

Transmembrane regions (helical) follow at residues 63–83 (LGFVHFSKWVELAWCFLTLAT) and 119–139 (ILLYLLICGVSLYGAIRIFIN).

The protein localises to the membrane. This is an uncharacterized protein from Schizosaccharomyces pombe (strain 972 / ATCC 24843) (Fission yeast).